Consider the following 301-residue polypeptide: Elongation factor Ts (301 aa).

The segment at 82 to 85 (TDFV) is involved in Mg(2+) ion dislocation from EF-Tu.

This sequence belongs to the EF-Ts family.

The protein localises to the cytoplasm. Associates with the EF-Tu.GDP complex and induces the exchange of GDP to GTP. It remains bound to the aminoacyl-tRNA.EF-Tu.GTP complex up to the GTP hydrolysis stage on the ribosome. The chain is Elongation factor Ts from Hyphomonas neptunium (strain ATCC 15444).